The following is a 400-amino-acid chain: Aspartate/prephenate aminotransferase (400 aa).

Residues G39, W125, and N175 each coordinate L-aspartate. K239 bears the N6-(pyridoxal phosphate)lysine mark. R375 is an L-aspartate binding site.

It belongs to the class-I pyridoxal-phosphate-dependent aminotransferase family. As to quaternary structure, homodimer. The cofactor is pyridoxal 5'-phosphate.

The protein localises to the cytoplasm. It catalyses the reaction L-aspartate + 2-oxoglutarate = oxaloacetate + L-glutamate. It carries out the reaction L-arogenate + 2-oxoglutarate = prephenate + L-glutamate. Functionally, catalyzes the reversible conversion of aspartate and 2-oxoglutarate to glutamate and oxaloacetate. Can also transaminate prephenate in the presence of glutamate. This chain is Aspartate/prephenate aminotransferase, found in Cereibacter sphaeroides (strain ATCC 17029 / ATH 2.4.9) (Rhodobacter sphaeroides).